Here is a 273-residue protein sequence, read N- to C-terminus: Large ribosomal subunit protein uL2 (273 aa).

Positions 221–263 are disordered; sequence RGTAMNPVDHPHGGGEGRNFGKHPVSPWGLKTKGKKTRRNKRT. The segment covering 252–263 has biased composition (basic residues); the sequence is TKGKKTRRNKRT.

Belongs to the universal ribosomal protein uL2 family. In terms of assembly, part of the 50S ribosomal subunit. Forms a bridge to the 30S subunit in the 70S ribosome.

In terms of biological role, one of the primary rRNA binding proteins. Required for association of the 30S and 50S subunits to form the 70S ribosome, for tRNA binding and peptide bond formation. It has been suggested to have peptidyltransferase activity; this is somewhat controversial. Makes several contacts with the 16S rRNA in the 70S ribosome. The chain is Large ribosomal subunit protein uL2 from Buchnera aphidicola subsp. Cinara cedri (strain Cc).